We begin with the raw amino-acid sequence, 325 residues long: Beta-ketoacyl-[acyl-carrier-protein] synthase III (325 aa).

Catalysis depends on residues Cys-116 and His-252. Positions 253 to 257 (QANLR) are ACP-binding. Residue Asn-282 is part of the active site.

It belongs to the thiolase-like superfamily. FabH family. In terms of assembly, homodimer.

Its subcellular location is the cytoplasm. It carries out the reaction malonyl-[ACP] + acetyl-CoA + H(+) = 3-oxobutanoyl-[ACP] + CO2 + CoA. It participates in lipid metabolism; fatty acid biosynthesis. In terms of biological role, catalyzes the condensation reaction of fatty acid synthesis by the addition to an acyl acceptor of two carbons from malonyl-ACP. Catalyzes the first condensation reaction which initiates fatty acid synthesis and may therefore play a role in governing the total rate of fatty acid production. Possesses both acetoacetyl-ACP synthase and acetyl transacylase activities. Its substrate specificity determines the biosynthesis of branched-chain and/or straight-chain of fatty acids. The polypeptide is Beta-ketoacyl-[acyl-carrier-protein] synthase III (Xanthomonas euvesicatoria pv. vesicatoria (strain 85-10) (Xanthomonas campestris pv. vesicatoria)).